The sequence spans 558 residues: Formate--tetrahydrofolate ligase 2 (558 aa).

67–74 (TPAGEGKT) provides a ligand contact to ATP.

Belongs to the formate--tetrahydrofolate ligase family.

The catalysed reaction is (6S)-5,6,7,8-tetrahydrofolate + formate + ATP = (6R)-10-formyltetrahydrofolate + ADP + phosphate. It functions in the pathway one-carbon metabolism; tetrahydrofolate interconversion. The chain is Formate--tetrahydrofolate ligase 2 from Desulfitobacterium hafniense (strain Y51).